We begin with the raw amino-acid sequence, 421 residues long: UDP-N-acetylglucosamine 1-carboxyvinyltransferase (421 aa).

Residue K22–N23 participates in phosphoenolpyruvate binding. R93 contributes to the UDP-N-acetyl-alpha-D-glucosamine binding site. The active-site Proton donor is the C117. The residue at position 117 (C117) is a 2-(S-cysteinyl)pyruvic acid O-phosphothioketal. Residues R122–L126, D308, and L330 contribute to the UDP-N-acetyl-alpha-D-glucosamine site.

This sequence belongs to the EPSP synthase family. MurA subfamily.

The protein resides in the cytoplasm. The enzyme catalyses phosphoenolpyruvate + UDP-N-acetyl-alpha-D-glucosamine = UDP-N-acetyl-3-O-(1-carboxyvinyl)-alpha-D-glucosamine + phosphate. It functions in the pathway cell wall biogenesis; peptidoglycan biosynthesis. Functionally, cell wall formation. Adds enolpyruvyl to UDP-N-acetylglucosamine. This Helicobacter hepaticus (strain ATCC 51449 / 3B1) protein is UDP-N-acetylglucosamine 1-carboxyvinyltransferase.